Consider the following 901-residue polypeptide: Translation initiation factor IF-2 (901 aa).

A disordered region spans residues 48–313; that stretch reads HLNREHGGSS…SSLQQGFTKP (266 aa). Residues 68 to 82 show a composition bias toward polar residues; the sequence is STLSVPGTGGKSKSV. The segment covering 106 to 226 has biased composition (basic and acidic residues); the sequence is ALAKREAEEQ…RMAEANEGKW (121 aa). Residues 263-277 are compositionally biased toward basic residues; that stretch reads ARGRGGKAAKQKKGS. Positions 278–291 are enriched in basic and acidic residues; that stretch reads KLSESKADREEARA. A tr-type G domain is found at 400–569; sequence PRAPVVTIMG…LLQAEVLELK (170 aa). Positions 409–416 are G1; that stretch reads GHVDHGKT. Residue 409-416 participates in GTP binding; that stretch reads GHVDHGKT. Positions 434–438 are G2; the sequence is GITQH. Residues 455 to 458 are G3; the sequence is DTPG. GTP is bound by residues 455–459 and 509–512; these read DTPGH and NKID. Residues 509–512 form a G4 region; that stretch reads NKID. The segment at 545–547 is G5; that stretch reads SAK.

The protein belongs to the TRAFAC class translation factor GTPase superfamily. Classic translation factor GTPase family. IF-2 subfamily.

Its subcellular location is the cytoplasm. Its function is as follows. One of the essential components for the initiation of protein synthesis. Protects formylmethionyl-tRNA from spontaneous hydrolysis and promotes its binding to the 30S ribosomal subunits. Also involved in the hydrolysis of GTP during the formation of the 70S ribosomal complex. The polypeptide is Translation initiation factor IF-2 (Edwardsiella ictaluri (strain 93-146)).